We begin with the raw amino-acid sequence, 490 residues long: Adenylosuccinate synthetase, chloroplastic (490 aa).

The N-terminal 45 residues, 1 to 45, are a transit peptide targeting the chloroplast; the sequence is MSLSSLTLDSNPRFAVGGPYHRRYPPLHHPRSFVSCSAKRPAVSA. An N-acetylserine modification is found at serine 46. GTP is bound by residues 77 to 83 and 105 to 107; these read GDEGKGK and GHT. Aspartate 78 (proton acceptor) is an active-site residue. Aspartate 78 and glycine 105 together coordinate Mg(2+). IMP-binding positions include 78–81, 103–106, threonine 195, arginine 209, glutamine 289, threonine 304, and arginine 368; these read DEGK and NAGH. Catalysis depends on histidine 106, which acts as the Proton donor. Residue 364–370 participates in substrate binding; it reads TTTGRPR. GTP is bound by residues arginine 370, 396 to 398, and 479 to 481; these read KLD and GIG.

The protein belongs to the adenylosuccinate synthetase family. In terms of assembly, homodimer. It depends on Mg(2+) as a cofactor.

It is found in the plastid. The protein resides in the chloroplast. It carries out the reaction IMP + L-aspartate + GTP = N(6)-(1,2-dicarboxyethyl)-AMP + GDP + phosphate + 2 H(+). It functions in the pathway purine metabolism; AMP biosynthesis via de novo pathway; AMP from IMP: step 1/2. Functionally, plays an important role in the de novo pathway and in the salvage pathway of purine nucleotide biosynthesis. Catalyzes the first committed step in the biosynthesis of AMP from IMP. The protein is Adenylosuccinate synthetase, chloroplastic of Arabidopsis thaliana (Mouse-ear cress).